Here is a 461-residue protein sequence, read N- to C-terminus: High-affinity Na(+)/H(+) antiporter NhaS3 (461 aa).

The next 11 helical transmembrane spans lie at threonine 22 to alanine 42, valine 58 to phenylalanine 78, serine 113 to leucine 133, alanine 148 to phenylalanine 170, isoleucine 175 to alanine 197, isoleucine 209 to glycine 229, isoleucine 239 to isoleucine 259, leucine 280 to leucine 300, glycine 360 to phenylalanine 380, leucine 391 to glycine 411, and alanine 424 to phenylalanine 444.

Belongs to the monovalent cation:proton antiporter 2 (CPA2) transporter (TC 2.A.37) family.

Its subcellular location is the cellular thylakoid membrane. Its function is as follows. Na(+)/H(+) antiporter that transports sodium from the cytoplasm into the thylakoid lumen in exchange for protons. Contributes to sodium homeostasis and tolerance. Also has Li(+)/H(+) antiport activity under K(+)-free conditions, but not under K(+)-rich conditions. The chain is High-affinity Na(+)/H(+) antiporter NhaS3 (nhaS3) from Synechocystis sp. (strain ATCC 27184 / PCC 6803 / Kazusa).